A 163-amino-acid chain; its full sequence is Putative pre-16S rRNA nuclease (163 aa).

The protein belongs to the YqgF nuclease family.

It localises to the cytoplasm. In terms of biological role, could be a nuclease involved in processing of the 5'-end of pre-16S rRNA. The chain is Putative pre-16S rRNA nuclease from Rhizobium leguminosarum bv. trifolii (strain WSM2304).